The chain runs to 104 residues: Large ribosomal subunit protein uL24 (104 aa).

The protein belongs to the universal ribosomal protein uL24 family. In terms of assembly, part of the 50S ribosomal subunit.

One of two assembly initiator proteins, it binds directly to the 5'-end of the 23S rRNA, where it nucleates assembly of the 50S subunit. In terms of biological role, one of the proteins that surrounds the polypeptide exit tunnel on the outside of the subunit. The chain is Large ribosomal subunit protein uL24 from Mesorhizobium japonicum (strain LMG 29417 / CECT 9101 / MAFF 303099) (Mesorhizobium loti (strain MAFF 303099)).